We begin with the raw amino-acid sequence, 153 residues long: 6,7-dimethyl-8-ribityllumazine synthase (153 aa).

Residues Phe22, 56-58, and 80-82 each bind 5-amino-6-(D-ribitylamino)uracil; these read AFE and AVI. 85–86 contacts (2S)-2-hydroxy-3-oxobutyl phosphate; that stretch reads AT. His88 acts as the Proton donor in catalysis. Residue Phe113 participates in 5-amino-6-(D-ribitylamino)uracil binding. A (2S)-2-hydroxy-3-oxobutyl phosphate-binding site is contributed by Arg127.

It belongs to the DMRL synthase family.

It catalyses the reaction (2S)-2-hydroxy-3-oxobutyl phosphate + 5-amino-6-(D-ribitylamino)uracil = 6,7-dimethyl-8-(1-D-ribityl)lumazine + phosphate + 2 H2O + H(+). It participates in cofactor biosynthesis; riboflavin biosynthesis; riboflavin from 2-hydroxy-3-oxobutyl phosphate and 5-amino-6-(D-ribitylamino)uracil: step 1/2. Catalyzes the formation of 6,7-dimethyl-8-ribityllumazine by condensation of 5-amino-6-(D-ribitylamino)uracil with 3,4-dihydroxy-2-butanone 4-phosphate. This is the penultimate step in the biosynthesis of riboflavin. The sequence is that of 6,7-dimethyl-8-ribityllumazine synthase from Alkaliphilus metalliredigens (strain QYMF).